Here is a 228-residue protein sequence, read N- to C-terminus: Glutamate transport system permease protein GluC (228 aa).

4 helical membrane passes run 16 to 36 (FWVT…LGTI), 64 to 84 (LTLV…LTLA), 100 to 120 (AVLG…RSGI), and 195 to 215 (LFVV…PMGL). One can recognise an ABC transmembrane type-1 domain in the interval 16–217 (FWVTIQLTVY…ILTLPMGLGL (202 aa)).

The protein belongs to the binding-protein-dependent transport system permease family. HisMQ subfamily. The complex is composed of two ATP-binding proteins (GluA), two transmembrane proteins (GluC and GluD) and a solute-binding protein (GluB).

The protein localises to the cell membrane. Its function is as follows. Part of the ABC transporter complex GluABCD involved in glutamate uptake. Probably responsible for the translocation of the substrate across the membrane. In Corynebacterium efficiens (strain DSM 44549 / YS-314 / AJ 12310 / JCM 11189 / NBRC 100395), this protein is Glutamate transport system permease protein GluC.